We begin with the raw amino-acid sequence, 1571 residues long: Disco-interacting protein 2 homolog A (1571 aa).

A DMAP1-binding domain is found at 9–127 (EAAPLPAEVR…KRRSVLVHSS (119 aa)). Residues 60–203 (LQAENRIPGP…APSAAATPGA (144 aa)) form a disordered region. Residues 86-98 (ASRDERFRSDVHT) are compositionally biased toward basic and acidic residues. Residue Ser-94 is modified to Phosphoserine. Composition is skewed to polar residues over residues 127-139 (SVETYTPPDTSSA) and 152-162 (LTSTPLQSHSS). Phosphothreonine is present on residues Thr-132 and Thr-155. A compositionally biased stretch (low complexity) spans 174–203 (SSTSSSASSTSSHPGGRPTTAPSAAATPGA). Short sequence motifs (PXXP motif; required for interaction with CTTN) lie at residues 283–286 (PKRP) and 307–310 (PNQP). The tract at residues 302 to 327 (VQQPDPNQPKPEGSETSVLRGEPLTA) is disordered.

The protein belongs to the DIP2 family. In terms of assembly, interacts with FSTL1; DIP2A may act as a cell surface receptor for FSTL1. Interacts (via N-terminus) with CTTN (via SH3 domain); the interaction promotes acetylation of CTTN and is required for proper synaptic transmission. Interacts with SHANK3. In terms of tissue distribution, low expression in all tissues tested.

It is found in the cell membrane. The protein resides in the mitochondrion. Its subcellular location is the cell projection. The protein localises to the dendritic spine. The enzyme catalyses acetate + ATP + CoA = acetyl-CoA + AMP + diphosphate. In terms of biological role, catalyzes the de novo synthesis of acetyl-CoA in vitro. Promotes acetylation of CTTN, possibly by providing the acetyl donor, ensuring correct dendritic spine morphology and synaptic transmission. Binds to follistatin-related protein FSTL1 and may act as a cell surface receptor for FSTL1, contributing to AKT activation and subsequent FSTL1-induced survival and function of endothelial cells and cardiac myocytes. In Homo sapiens (Human), this protein is Disco-interacting protein 2 homolog A (DIP2A).